The chain runs to 241 residues: Small ribosomal subunit protein bS6 (241 aa).

Basic residues predominate over residues 97 to 108 (KPKIRERNRKYT). The disordered stretch occupies residues 97–241 (KPKIRERNRK…YNNKKPQSSN (145 aa)). Basic and acidic residues predominate over residues 109–118 (LRRDRFDKPN). Composition is skewed to low complexity over residues 130–151 (QDQQATKNQQNFQQNQQNQASQ) and 161–182 (DDFQQVSSNQQNFGQNQQNQSG). The segment covering 183–193 (YHRENNRHNQE) has biased composition (basic and acidic residues). Residues 194–210 (NMHQNNKNHQNQTSQTQ) show a composition bias toward low complexity.

Belongs to the bacterial ribosomal protein bS6 family.

Functionally, binds together with bS18 to 16S ribosomal RNA. This chain is Small ribosomal subunit protein bS6, found in Mesomycoplasma hyopneumoniae (strain J / ATCC 25934 / NCTC 10110) (Mycoplasma hyopneumoniae).